The primary structure comprises 119 residues: Putative mating-type protein A2 (119 aa).

A DNA-binding region (homeobox; TALE-type) is located at residues 38–100; sequence KPYRGHRFTK…NRRRKEKTIT (63 aa).

This sequence belongs to the TALE/M-ATYP homeobox family.

The protein resides in the nucleus. In terms of biological role, probably not a functional protein. Cells lacking A2 show no obvious alterations in mating, sporulation and cell growth. This chain is Putative mating-type protein A2 (MATA2), found in Saccharomyces cerevisiae (Baker's yeast).